Consider the following 240-residue polypeptide: Penton protein H240R (240 aa).

Belongs to the asfivirus H240R family.

It is found in the virion. In terms of biological role, forms the penton at the fivefold vertices of the icosahedral capsid. Together with the minor capsid proteins (p17, p49, and M1249L), forms a complicated network immediately below the outer capsid shell, stabilizing the whole capsid. In African swine fever virus (isolate Tick/South Africa/Pretoriuskop Pr4/1996) (ASFV), this protein is Penton protein H240R.